Reading from the N-terminus, the 304-residue chain is Recombination-associated protein RdgC (304 aa).

The protein belongs to the RdgC family.

The protein resides in the cytoplasm. The protein localises to the nucleoid. In terms of biological role, may be involved in recombination. This Shewanella oneidensis (strain ATCC 700550 / JCM 31522 / CIP 106686 / LMG 19005 / NCIMB 14063 / MR-1) protein is Recombination-associated protein RdgC.